A 500-amino-acid chain; its full sequence is Cytochrome P450 11B2, mitochondrial (500 aa).

Residues 1-24 (MALRAKADVWLARPWQCLPRTRAL) constitute a mitochondrion transit peptide. F381 is a binding site for 21-hydroxyprogesterone. C447 contacts heme.

The protein belongs to the cytochrome P450 family. The cofactor is heme. As to expression, adrenal gland.

Its subcellular location is the mitochondrion inner membrane. It catalyses the reaction a steroid + 2 reduced [adrenodoxin] + O2 + 2 H(+) = an 11beta-hydroxysteroid + 2 oxidized [adrenodoxin] + H2O. The enzyme catalyses 21-hydroxyprogesterone + 2 reduced [adrenodoxin] + O2 + 2 H(+) = corticosterone + 2 oxidized [adrenodoxin] + H2O. It carries out the reaction corticosterone + 2 reduced [adrenodoxin] + O2 + 2 H(+) = 18-hydroxycorticosterone + 2 oxidized [adrenodoxin] + H2O. The catalysed reaction is 18-hydroxycorticosterone + 2 reduced [adrenodoxin] + O2 + 2 H(+) = aldosterone + 2 oxidized [adrenodoxin] + 2 H2O. It catalyses the reaction 11-deoxycortisol + 2 reduced [adrenodoxin] + O2 + 2 H(+) = cortisol + 2 oxidized [adrenodoxin] + H2O. The enzyme catalyses 21-hydroxyprogesterone + 2 reduced [adrenodoxin] + O2 + 2 H(+) = 18-hydroxy-11-deoxycorticosterone + 2 oxidized [adrenodoxin] + H2O. It carries out the reaction cortisol + 2 reduced [adrenodoxin] + O2 + 2 H(+) = 18-hydroxycortisol + 2 oxidized [adrenodoxin] + H2O. The catalysed reaction is 18-hydroxycortisol + 2 reduced [adrenodoxin] + O2 + 2 H(+) = 18-oxocortisol + 2 oxidized [adrenodoxin] + 2 H2O. Its pathway is steroid biosynthesis. Its function is as follows. A cytochrome P450 monooxygenase that catalyzes the biosynthesis of aldosterone, the main mineralocorticoid in the human body responsible for salt and water homeostasis, thus involved in blood pressure regulation, arterial hypertension, and the development of heart failure. Catalyzes three sequential oxidative reactions of 11-deoxycorticosterone (21-hydroxyprogesterone), namely 11-beta hydroxylation, followed by two successive oxidations at C18 yielding 18-hydroxy and then 18-oxo intermediates (that would not leave the enzyme active site during the consecutive hydroxylation reactions), ending with the formation of aldosterone. Can also produce 18-hydroxycortisol and 18-oxocortisol, derived from successive oxidations of cortisol at C18, normally found at very low levels, but significantly increased in primary aldosteronism, the most common form of secondary hypertension. Mechanistically, uses molecular oxygen inserting one oxygen atom into a substrate and reducing the second into a water molecule. Two electrons are provided by NADPH via a two-protein mitochondrial transfer system comprising flavoprotein FDXR (adrenodoxin/ferredoxin reductase) and nonheme iron-sulfur protein FDX1 or FDX2 (adrenodoxin/ferredoxin). Could also be involved in the androgen metabolic pathway. This Mesocricetus auratus (Golden hamster) protein is Cytochrome P450 11B2, mitochondrial (CYP11B2).